The sequence spans 201 residues: Large ribosomal subunit protein uL4 (201 aa).

The tract at residues 44-71 is disordered; the sequence is RAQKTRAEVSGSGKKPWRQKGTGRARSG.

It belongs to the universal ribosomal protein uL4 family. In terms of assembly, part of the 50S ribosomal subunit.

Functionally, one of the primary rRNA binding proteins, this protein initially binds near the 5'-end of the 23S rRNA. It is important during the early stages of 50S assembly. It makes multiple contacts with different domains of the 23S rRNA in the assembled 50S subunit and ribosome. In terms of biological role, forms part of the polypeptide exit tunnel. In Photorhabdus laumondii subsp. laumondii (strain DSM 15139 / CIP 105565 / TT01) (Photorhabdus luminescens subsp. laumondii), this protein is Large ribosomal subunit protein uL4.